The sequence spans 149 residues: UPF0756 membrane protein BBR47_12340 (149 aa).

Transmembrane regions (helical) follow at residues 6-26 (IILL…LVYA), 48-68 (PMFH…IAKG), 86-106 (IAIL…SILP), and 120-140 (LLAV…AGCI).

This sequence belongs to the UPF0756 family.

The protein resides in the cell membrane. The chain is UPF0756 membrane protein BBR47_12340 from Brevibacillus brevis (strain 47 / JCM 6285 / NBRC 100599).